Here is a 470-residue protein sequence, read N- to C-terminus: Mitogen-activated protein kinase 15 (470 aa).

The Protein kinase domain occupies 13–306; that stretch reads FDLQKRLGKG…VEQCLVHPYV (294 aa). ATP-binding positions include 19–27 and lysine 42; that span reads LGKGAYGIV. Aspartate 137 acts as the Proton acceptor in catalysis. Residue threonine 178 is modified to Phosphothreonine. Residues 178–180 carry the TXY motif; sequence TEY. Residue tyrosine 180 is modified to Phosphotyrosine. Positions 362-445 are disordered; the sequence is PYGEDKSRAP…PSSIKQRRRS (84 aa). Residues 394-406 are compositionally biased toward low complexity; sequence MDKNNSSSHDSSS. Over residues 409–426 the composition is skewed to basic and acidic residues; that stretch reads LRERAASAESRTSKDSNG.

Belongs to the protein kinase superfamily. CMGC Ser/Thr protein kinase family. MAP kinase subfamily. Mg(2+) is required as a cofactor. Post-translationally, dually phosphorylated on Thr-178 and Tyr-180, which activates the enzyme. In terms of tissue distribution, expressed in the URX neuron and in many other head sensory neurons. Isoform a: Expressed in head and tail ciliated sensory neurons, and in mid-body neurons. Isoform c: Expressed in head and tail ciliated sensory neurons, and in mid-body neurons.

The protein resides in the cell projection. The protein localises to the cilium. It localises to the cilium membrane. It is found in the cytoplasm. Its subcellular location is the cytoskeleton. The protein resides in the cilium axoneme. The protein localises to the cilium basal body. It localises to the cell junction. It is found in the perikaryon. Its subcellular location is the dendrite. The catalysed reaction is L-seryl-[protein] + ATP = O-phospho-L-seryl-[protein] + ADP + H(+). It carries out the reaction L-threonyl-[protein] + ATP = O-phospho-L-threonyl-[protein] + ADP + H(+). Its activity is regulated as follows. Activated by threonine and tyrosine phosphorylation. Its function is as follows. Atypical MAPK protein. Regulates primary cilium formation in sensory neurons and the localization of ciliary proteins involved in cilium structure, transport, and signaling. Acts in dopamine (DA) neurons to support synaptic membrane dat-1 availability via activation of rho-1 thereby sustaining normal levels of DA clearance. Plays a role in male mating behavior, probably in part through regulating the localization of the polycystin pkd-2. Functions postembryonically in the URX sensory neurons to constrain URX dendrite growth throughout lifetime, probably by restricting expansion of the subcellular sensory compartment at the dendrite ending. This chain is Mitogen-activated protein kinase 15, found in Caenorhabditis elegans.